The following is a 181-amino-acid chain: Oligoribonuclease (181 aa).

The 164-residue stretch at 8–171 (LIWIDLEMTG…DDIRESVAEL (164 aa)) folds into the Exonuclease domain. Tyr-129 is an active-site residue.

It belongs to the oligoribonuclease family.

The protein resides in the cytoplasm. In terms of biological role, 3'-to-5' exoribonuclease specific for small oligoribonucleotides. In Yersinia enterocolitica serotype O:8 / biotype 1B (strain NCTC 13174 / 8081), this protein is Oligoribonuclease.